We begin with the raw amino-acid sequence, 124 residues long: Small ribosomal subunit protein uS12 (124 aa).

A 3-methylthioaspartic acid modification is found at D89.

The protein belongs to the universal ribosomal protein uS12 family. Part of the 30S ribosomal subunit. Contacts proteins S8 and S17. May interact with IF1 in the 30S initiation complex.

Its function is as follows. With S4 and S5 plays an important role in translational accuracy. Interacts with and stabilizes bases of the 16S rRNA that are involved in tRNA selection in the A site and with the mRNA backbone. Located at the interface of the 30S and 50S subunits, it traverses the body of the 30S subunit contacting proteins on the other side and probably holding the rRNA structure together. The combined cluster of proteins S8, S12 and S17 appears to hold together the shoulder and platform of the 30S subunit. The chain is Small ribosomal subunit protein uS12 from Caldanaerobacter subterraneus subsp. tengcongensis (strain DSM 15242 / JCM 11007 / NBRC 100824 / MB4) (Thermoanaerobacter tengcongensis).